The sequence spans 390 residues: Probable galacturonosyltransferase-like 9 (390 aa).

At 1–10 (MRLRFPMKSA) the chain is on the cytoplasmic side. Residues 11-31 (VLAFAIFLVFIPLFSVGIRMI) form a helical; Signal-anchor for type II membrane protein membrane-spanning segment. The Lumenal segment spans residues 32 to 390 (PGRLTAVSAT…SELTEDSSFF (359 aa)). Asn205 and Asn223 each carry an N-linked (GlcNAc...) asparagine glycan.

This sequence belongs to the glycosyltransferase 8 family.

The protein localises to the golgi apparatus membrane. It participates in glycan metabolism; pectin biosynthesis. Functionally, may be involved in pectin and/or xylans biosynthesis in cell walls. This Arabidopsis thaliana (Mouse-ear cress) protein is Probable galacturonosyltransferase-like 9 (GATL9).